We begin with the raw amino-acid sequence, 49 residues long: Protein YdfW (49 aa).

Residues proline 16–aspartate 49 are disordered.

Functionally, may be involved in H(2) production during fermentative growth. This Escherichia coli (strain K12) protein is Protein YdfW (ydfW).